Reading from the N-terminus, the 433-residue chain is 3-phosphoshikimate 1-carboxyvinyltransferase (433 aa).

Residues Lys22, Ser23, and Arg27 each contribute to the 3-phosphoshikimate site. Residue Lys22 coordinates phosphoenolpyruvate. 2 residues coordinate phosphoenolpyruvate: Gly95 and Arg123. Positions 167, 169, 315, and 342 each coordinate 3-phosphoshikimate. Phosphoenolpyruvate is bound at residue Gln169. The active-site Proton acceptor is Asp315. Arg346 and Arg387 together coordinate phosphoenolpyruvate.

The protein belongs to the EPSP synthase family. In terms of assembly, monomer.

The protein localises to the cytoplasm. The catalysed reaction is 3-phosphoshikimate + phosphoenolpyruvate = 5-O-(1-carboxyvinyl)-3-phosphoshikimate + phosphate. Its pathway is metabolic intermediate biosynthesis; chorismate biosynthesis; chorismate from D-erythrose 4-phosphate and phosphoenolpyruvate: step 6/7. Its function is as follows. Catalyzes the transfer of the enolpyruvyl moiety of phosphoenolpyruvate (PEP) to the 5-hydroxyl of shikimate-3-phosphate (S3P) to produce enolpyruvyl shikimate-3-phosphate and inorganic phosphate. In Legionella pneumophila (strain Corby), this protein is 3-phosphoshikimate 1-carboxyvinyltransferase.